A 344-amino-acid chain; its full sequence is Rho guanine nucleotide exchange factor 39 (344 aa).

The 176-residue stretch at 22–197 (KRVCTARELL…SETAQKVHAI (176 aa)) folds into the DH domain. The region spanning 227–331 (WFLRQGWLLV…WHHSLTLAIR (105 aa)) is the PH domain.

The protein localises to the cell membrane. Its function is as follows. Promotes cell proliferation. The protein is Rho guanine nucleotide exchange factor 39 (Arhgef39) of Mus musculus (Mouse).